Reading from the N-terminus, the 238-residue chain is Ribonuclease PH (238 aa).

Residues arginine 86 and 124–126 (GTR) contribute to the phosphate site.

Belongs to the RNase PH family. Homohexameric ring arranged as a trimer of dimers.

The enzyme catalyses tRNA(n+1) + phosphate = tRNA(n) + a ribonucleoside 5'-diphosphate. Its function is as follows. Phosphorolytic 3'-5' exoribonuclease that plays an important role in tRNA 3'-end maturation. Removes nucleotide residues following the 3'-CCA terminus of tRNAs; can also add nucleotides to the ends of RNA molecules by using nucleoside diphosphates as substrates, but this may not be physiologically important. Probably plays a role in initiation of 16S rRNA degradation (leading to ribosome degradation) during starvation. This chain is Ribonuclease PH, found in Geobacter sulfurreducens (strain ATCC 51573 / DSM 12127 / PCA).